A 481-amino-acid chain; its full sequence is MTNNKLLFKKDVNGPWSLPIIGGIYLINDNPNRALTKLSKKYGGIYKIWLGESFSMVVSDPEIVNEIWVKQHDNFINRPKNITHKMFSSNYRSLNFGDNPNWKFNRSMASSHFTKTKLLSSKVTSVVEKKLNKLIETMEYHSINKLPFDSYVGFSEYSLNIILNMLVSMDIDECENSTQNVIYSINEIFKMLSTNSPQYSFPYLKFFFKKDLNNFKFHLDKIKSFIHSIYLKQLESYDPSNPRNILDSFISDLQSNDIDILLQICIDIVVAGTDTVANLLQWFVLFCINYPEIQEKLYNEIIEVVGKDCKVLKYEHISKMPYLYGCFRESLRIRPVTPLSLPRVAKCDTYIKDDIFIPKGATIIQNIFGMGNDEKYISEPNKFKPERWVEYIKNKKVNKNGNENSVNKYFNDLDKISIPFGVGKRQCLSPAMAEQESLLSIATVVLNYKLKSNGQKKLNEKEVYSITIKPQPFKLFLEKRV.

Cysteine 427 provides a ligand contact to heme.

The protein belongs to the cytochrome P450 family. Requires heme as cofactor.

The sequence is that of Putative cytochrome P450 520B1 (cyp520B1) from Dictyostelium discoideum (Social amoeba).